The sequence spans 125 residues: Large ribosomal subunit protein bL12 (125 aa).

Belongs to the bacterial ribosomal protein bL12 family. In terms of assembly, homodimer. Part of the ribosomal stalk of the 50S ribosomal subunit. Forms a multimeric L10(L12)X complex, where L10 forms an elongated spine to which 2 to 4 L12 dimers bind in a sequential fashion. Binds GTP-bound translation factors.

Forms part of the ribosomal stalk which helps the ribosome interact with GTP-bound translation factors. Is thus essential for accurate translation. The sequence is that of Large ribosomal subunit protein bL12 from Erythrobacter litoralis (strain HTCC2594).